Reading from the N-terminus, the 385-residue chain is 1-deoxy-D-xylulose 5-phosphate reductoisomerase 1 (385 aa).

NADPH is bound by residues Thr-11, Gly-12, Ser-13, Ile-14, Asn-39, and Asn-122. Position 123 (Lys-123) interacts with 1-deoxy-D-xylulose 5-phosphate. Residue Glu-124 coordinates NADPH. Asp-148 provides a ligand contact to Mn(2+). 1-deoxy-D-xylulose 5-phosphate-binding residues include Ser-149, Glu-150, Ser-174, and His-197. Glu-150 contributes to the Mn(2+) binding site. Gly-203 is a binding site for NADPH. The 1-deoxy-D-xylulose 5-phosphate site is built by Ser-210, Asn-215, Lys-216, and Glu-219. Glu-219 lines the Mn(2+) pocket.

Belongs to the DXR family. Requires Mg(2+) as cofactor. It depends on Mn(2+) as a cofactor.

It catalyses the reaction 2-C-methyl-D-erythritol 4-phosphate + NADP(+) = 1-deoxy-D-xylulose 5-phosphate + NADPH + H(+). Its pathway is isoprenoid biosynthesis; isopentenyl diphosphate biosynthesis via DXP pathway; isopentenyl diphosphate from 1-deoxy-D-xylulose 5-phosphate: step 1/6. Functionally, catalyzes the NADPH-dependent rearrangement and reduction of 1-deoxy-D-xylulose-5-phosphate (DXP) to 2-C-methyl-D-erythritol 4-phosphate (MEP). This Bacillus anthracis protein is 1-deoxy-D-xylulose 5-phosphate reductoisomerase 1.